The following is a 334-amino-acid chain: UL-16 binding protein 5 (334 aa).

An N-terminal signal peptide occupies residues 1-25 (MAAAASPAFLLRLPLLLLLSSWCRT). Over 26–223 (GLADPHSLCY…TMSSGTAQPR (198 aa)) the chain is Extracellular. The interval 29–117 (DPHSLCYDIT…IQLENYIPKE (89 aa)) is MHC class I alpha-1 like. Cys50 and Cys66 are joined by a disulfide. An N-linked (GlcNAc...) asparagine glycan is attached at Asn82. An MHC class I alpha-2 like region spans residues 118–210 (PLTLQARMSC…MDSTLEPSAG (93 aa)). Cys127 and Cys190 are oxidised to a cystine. Residue Gly218 is the site of GPI-anchor amidated glycine attachment. A propeptide spans 219 to 334 (TAQPRATATT…YSEPLQVSIS (116 aa)) (removed in mature form). A helical transmembrane segment spans residues 224–243 (ATATTLILCCLLIMCLLICS). At 244–334 (RHSLTQSHGH…YSEPLQVSIS (91 aa)) the chain is on the cytoplasmic side.

The protein belongs to the MHC class I family. In terms of assembly, interacts with KLRK1/NKG2D. As to quaternary structure, (Microbial infection) In CMV-infected cells, interacts with the viral glycoprotein UL16; this interaction causes RAET1G retention in the endoplasmic reticulum and cis-Golgi and prevents binding to and activation of KLRK1/NKG2D, providing CMV with an immune evasion mechanism. In terms of processing, the functional form is cleaved C-terminally of the GPI-anchor and yields a 28 kDa protein. In terms of tissue distribution, isoform 1 is highly expressed in colon and in a number of tumor cell lines and highly restricted in normal tissues. Both isoforms are frequently expressed in cell lines derived from epithelial cancers, and in primary breast cancers.

It is found in the cell membrane. Its subcellular location is the endoplasmic reticulum. The protein resides in the secreted. Functionally, binds and activates the KLRK1/NKG2D receptor, mediating natural killer cell cytotoxicity. In terms of biological role, down-regulates the expression of KLRK1 and stimulates natural killer cells to secrete IFNG. Its function is as follows. Stimulates natural killer cells to secrete IFNG. The sequence is that of UL-16 binding protein 5 from Homo sapiens (Human).